We begin with the raw amino-acid sequence, 200 residues long: Holliday junction branch migration complex subunit RuvA (200 aa).

Residues 1-64 are domain I; the sequence is MIAKLKGLLD…ENDMRLLGFA (64 aa). Residues 65–143 form a domain II region; it reads EASERDWFRL…ALPSAPGGAA (79 aa). The segment at 144-154 is flexible linker; that stretch reads MAANPAGGASA. The segment at 154 to 200 is domain III; the sequence is ADAVSALENLGFKPAIAARAVATAQGELGEGASESELIRVALKRAAG.

The protein belongs to the RuvA family. Homotetramer. Forms an RuvA(8)-RuvB(12)-Holliday junction (HJ) complex. HJ DNA is sandwiched between 2 RuvA tetramers; dsDNA enters through RuvA and exits via RuvB. An RuvB hexamer assembles on each DNA strand where it exits the tetramer. Each RuvB hexamer is contacted by two RuvA subunits (via domain III) on 2 adjacent RuvB subunits; this complex drives branch migration. In the full resolvosome a probable DNA-RuvA(4)-RuvB(12)-RuvC(2) complex forms which resolves the HJ.

The protein localises to the cytoplasm. Its function is as follows. The RuvA-RuvB-RuvC complex processes Holliday junction (HJ) DNA during genetic recombination and DNA repair, while the RuvA-RuvB complex plays an important role in the rescue of blocked DNA replication forks via replication fork reversal (RFR). RuvA specifically binds to HJ cruciform DNA, conferring on it an open structure. The RuvB hexamer acts as an ATP-dependent pump, pulling dsDNA into and through the RuvAB complex. HJ branch migration allows RuvC to scan DNA until it finds its consensus sequence, where it cleaves and resolves the cruciform DNA. This Erythrobacter litoralis (strain HTCC2594) protein is Holliday junction branch migration complex subunit RuvA.